Consider the following 339-residue polypeptide: Anthranilate phosphoribosyltransferase (339 aa).

5-phospho-alpha-D-ribose 1-diphosphate-binding positions include Gly82, 85–86 (GD), 92–95 (NIST), 110–118 (KHGNSSISS), and Ser122. Position 82 (Gly82) interacts with anthranilate. Mg(2+) is bound at residue Ser94. Asn113 serves as a coordination point for anthranilate. Arg168 contacts anthranilate. Asp227 and Glu228 together coordinate Mg(2+).

Belongs to the anthranilate phosphoribosyltransferase family. As to quaternary structure, homodimer. Requires Mg(2+) as cofactor.

It carries out the reaction N-(5-phospho-beta-D-ribosyl)anthranilate + diphosphate = 5-phospho-alpha-D-ribose 1-diphosphate + anthranilate. It functions in the pathway amino-acid biosynthesis; L-tryptophan biosynthesis; L-tryptophan from chorismate: step 2/5. Functionally, catalyzes the transfer of the phosphoribosyl group of 5-phosphorylribose-1-pyrophosphate (PRPP) to anthranilate to yield N-(5'-phosphoribosyl)-anthranilate (PRA). The sequence is that of Anthranilate phosphoribosyltransferase from Ruthia magnifica subsp. Calyptogena magnifica.